We begin with the raw amino-acid sequence, 185 residues long: MTATTAPRLKTRYREEIAGKLREEFSYENVMQVPGLVKIVVNMGVGDAARDSKLIDGAVKDLTTITGQKPAVTKARKSIAQFKLREGQPIGCHVTLRGDRMWEFLDRTLSLALPRIRDFRGLSPKQFDGRGNYTFGLTEQVMFHEIDQDKIDRVRGMDITVVTTATNDDEGRALLRHLGFPFKEN.

It belongs to the universal ribosomal protein uL5 family. As to quaternary structure, part of the 50S ribosomal subunit; part of the 5S rRNA/L5/L18/L25 subcomplex. Contacts the 5S rRNA and the P site tRNA. Forms a bridge to the 30S subunit in the 70S ribosome.

Functionally, this is one of the proteins that bind and probably mediate the attachment of the 5S RNA into the large ribosomal subunit, where it forms part of the central protuberance. In the 70S ribosome it contacts protein S13 of the 30S subunit (bridge B1b), connecting the 2 subunits; this bridge is implicated in subunit movement. Contacts the P site tRNA; the 5S rRNA and some of its associated proteins might help stabilize positioning of ribosome-bound tRNAs. The protein is Large ribosomal subunit protein uL5 of Streptomyces griseus subsp. griseus (strain JCM 4626 / CBS 651.72 / NBRC 13350 / KCC S-0626 / ISP 5235).